A 932-amino-acid polypeptide reads, in one-letter code: Protocadherin gamma-A2 (932 aa).

The first 28 residues, methionine 1–alanine 28, serve as a signal peptide directing secretion. 6 Cadherin domains span residues glycine 29–phenylalanine 133, glycine 134–phenylalanine 242, threonine 243–phenylalanine 347, tyrosine 348–phenylalanine 452, serine 453–isoleucine 562, and aspartate 570–alanine 682. Over glycine 29 to tyrosine 692 the chain is Extracellular. 2 N-linked (GlcNAc...) asparagine glycosylation sites follow: asparagine 419 and asparagine 545. N-linked (GlcNAc...) asparagine glycosylation is present at asparagine 685. Residues leucine 693–alanine 713 form a helical membrane-spanning segment. Over histidine 714–lysine 932 the chain is Cytoplasmic. 2 disordered regions span residues leucine 798 to asparagine 841 and alanine 902 to lysine 932. A compositionally biased stretch (polar residues) spans phenylalanine 806–asparagine 841. Residues asparagine 922–lysine 932 are compositionally biased toward basic residues.

It is found in the cell membrane. Functionally, potential calcium-dependent cell-adhesion protein. May be involved in the establishment and maintenance of specific neuronal connections in the brain. The protein is Protocadherin gamma-A2 (PCDHGA2) of Pan troglodytes (Chimpanzee).